A 706-amino-acid polypeptide reads, in one-letter code: Serine/threonine-protein kinase BUR1 (706 aa).

One can recognise a Protein kinase domain in the interval 38–339; the sequence is YKPLGKIGEG…AIGGKNHAYF (302 aa). ATP is bound by residues 44-52 and Lys-67; that span reads IGEGTFGEV. Asp-168 functions as the Proton acceptor in the catalytic mechanism. Basic and acidic residues-rich tracts occupy residues 360–523, 545–570, and 594–623; these read LDNH…RDSR, DYDRERDEDDRRRRPLPRDSSRDMTR, and DKVEDKGESHNKDDKPCDTENPRDSDKSRD. Residues 360 to 706 are disordered; it reads LDNHKRREQE…YGRKRPRIER (347 aa). The span at 625–648 shows a compositional bias: pro residues; that stretch reads GPPPGPPLPADGPPPPPSSNPPRP. Over residues 659 to 706 the composition is skewed to basic and acidic residues; the sequence is WRRDSRDRRESRDRDGRDRDGRDRRLSSSRYARDEFDEYGRKRPRIER.

This sequence belongs to the protein kinase superfamily. CMGC Ser/Thr protein kinase family. CDC2/CDKX subfamily.

The protein resides in the nucleus. It carries out the reaction L-seryl-[protein] + ATP = O-phospho-L-seryl-[protein] + ADP + H(+). It catalyses the reaction L-threonyl-[protein] + ATP = O-phospho-L-threonyl-[protein] + ADP + H(+). The enzyme catalyses [DNA-directed RNA polymerase] + ATP = phospho-[DNA-directed RNA polymerase] + ADP + H(+). Functionally, serine/threonine-protein kinase involved in transcription regulation. Phosphorylates the UBC2/RAD6 ubiquitin-conjugating enzyme (E2), leading to monoubiquitination of histone H2B and the silencing of telomeric-associated genes. Also required for histone H3 methylation. Necessary for the recovery from pheromone-induced growth arrest in the cell cycle G1 phase. In Yarrowia lipolytica (strain CLIB 122 / E 150) (Yeast), this protein is Serine/threonine-protein kinase BUR1 (BUR1).